Reading from the N-terminus, the 411-residue chain is Serine hydroxymethyltransferase (411 aa).

(6S)-5,6,7,8-tetrahydrofolate-binding positions include leucine 117 and 121–123 (GHL). Lysine 226 bears the N6-(pyridoxal phosphate)lysine mark. (6S)-5,6,7,8-tetrahydrofolate contacts are provided by residues glutamate 241 and 349–351 (SPF).

This sequence belongs to the SHMT family. In terms of assembly, homodimer. Requires pyridoxal 5'-phosphate as cofactor.

It is found in the cytoplasm. It catalyses the reaction (6R)-5,10-methylene-5,6,7,8-tetrahydrofolate + glycine + H2O = (6S)-5,6,7,8-tetrahydrofolate + L-serine. It participates in one-carbon metabolism; tetrahydrofolate interconversion. The protein operates within amino-acid biosynthesis; glycine biosynthesis; glycine from L-serine: step 1/1. Its function is as follows. Catalyzes the reversible interconversion of serine and glycine with tetrahydrofolate (THF) serving as the one-carbon carrier. This reaction serves as the major source of one-carbon groups required for the biosynthesis of purines, thymidylate, methionine, and other important biomolecules. Also exhibits THF-independent aldolase activity toward beta-hydroxyamino acids, producing glycine and aldehydes, via a retro-aldol mechanism. This chain is Serine hydroxymethyltransferase, found in Oceanobacillus iheyensis (strain DSM 14371 / CIP 107618 / JCM 11309 / KCTC 3954 / HTE831).